Reading from the N-terminus, the 856-residue chain is Phospholipase D gamma 2 (856 aa).

The C2 domain occupies 21–161 (PLATSSGSLM…CSGNRIEGLF (141 aa)). A Ca(2+)-binding site is contributed by D223. One can recognise a PLD phosphodiesterase 1 domain in the interval 362–397 (TIYTHHQKTMIVDAEAAQNRRKIVAFVGGLDLCNGR). Catalysis depends on residues H367, K369, and D374. H367 contacts a 1,2-diacyl-sn-glycero-3-phosphate. Residues H403 and H435 each coordinate Ca(2+). A 1,2-diacyl-sn-glycero-3-phosphate contacts are provided by Q562 and H707. The region spanning 702–729 (FMIYVHSKGMVVDDEFVLIGSANINQRS) is the PLD phosphodiesterase 2 domain. Residues H707, K709, and D714 contribute to the active site. Residue E770 participates in Ca(2+) binding.

The protein belongs to the phospholipase D family. C2-PLD subfamily. It depends on Ca(2+) as a cofactor. In terms of tissue distribution, highly expressed in roots and flowers, moderately in stems, leaves and seedlings and low in siliques. Not detected in seeds.

The protein localises to the cytoplasm. It localises to the membrane. It carries out the reaction a 1,2-diacyl-sn-glycero-3-phosphocholine + H2O = a 1,2-diacyl-sn-glycero-3-phosphate + choline + H(+). Inhibited by neomycin. Hydrolyzes glycerol-phospholipids at the terminal phosphodiesteric bond to generate phosphatidic acids (PA). Plays an important role in various cellular processes, including phytohormone action, vesicular trafficking, secretion, cytoskeletal arrangement, meiosis, tumor promotion, pathogenesis, membrane deterioration and senescence. Can use phosphatidylserine but prefers ethanolamine-containing lipids as substrates. Can use phosphatidylcholine (PC) as substrates in the presence of phosphatidylethanolamine (PE) and PIP2. Involved in membrane lipid modulation under aluminum (Al) stress and negatively modulate plant tolerance to Al. The polypeptide is Phospholipase D gamma 2 (Arabidopsis thaliana (Mouse-ear cress)).